Here is a 496-residue protein sequence, read N- to C-terminus: Fizzy-related protein homolog (496 aa).

Disordered stretches follow at residues 28–51 (RRTL…FIPS), 64–88 (INEN…GKDG), and 105–166 (EKVQ…SPRK). Phosphothreonine is present on Thr-32. The segment covering 32 to 42 (TPASSPVSSPS) has biased composition (polar residues). Ser-36 is subject to Phosphoserine. Positions 47–52 (RFIPSR) are involved in APC/FZR1 E3 ubiquitin-protein ligase complex activity. Lys-69 carries the post-translational modification N6-acetyllysine. Composition is skewed to basic and acidic residues over residues 76-86 (KAKDATSDNGK) and 106-126 (KVQD…EKKG). 4 positions are modified to phosphoserine: Ser-133, Ser-138, Ser-146, and Ser-151. A compositionally biased stretch (polar residues) spans 146 to 160 (SPYSLSPVSNKSQKL). Lys-159 carries the post-translational modification N6-acetyllysine. WD repeat units lie at residues 182–222 (PELQ…VTRL), 227–266 (VEGD…KLSM), 269–306 (GHTA…LQSE), 311–350 (GHRQ…PVQQ), 353–395 (EHLA…PLQC), 397–438 (DTGS…QVAK), and 441–480 (GHSY…RSTK).

The protein belongs to the WD repeat CDC20/Fizzy family. As to quaternary structure, the unphosphorylated form interacts with APC/C during mitosis. Interacts with NINL. Interacts (in complex with the anaphase promoting complex APC) with MAD2L2; inhibits FZR1-mediated APC/C activation. Interacts with SIRT2 and USP37. Interacts (via WD repeats) with MAK. Interacts with RBBP8/CtIP; this interaction leads to RBBP8 proteasomal degradation. Interacts with HECW2. Interacts with SASS6; the interaction is regulated by CENATAC and leads to SASS6 proteasomal degradation. Interacts (via N-terminus) with CCNF. Interacts with CDC6. Interacts with TK1 (via the KEN box). Acetylated. Deacetylated by SIRT2 at Lys-69 and Lys-159; deacetylation enhances the interaction of FZR1 with CDC27, leading to activation of anaphase promoting complex/cyclosome (APC/C). In terms of processing, following DNA damage, it is dephosphorylated by CDC14B in G2 phase, leading to its reassociation with the APC/C, and allowing an efficient G2 DNA damage checkpoint. Phosphorylated by MAK. Post-translationally, ubiquitinated by the SCF(CCNF) E3 ubiquitin-protein ligase complex; leading to its degradation by the proteasome. Isoform 2 is expressed at high levels in heart, liver, spleen and some cancer cell lines whereas isoform 3 is expressed only at low levels in these tissues.

It localises to the nucleus. Its subcellular location is the cytoplasm. It functions in the pathway protein modification; protein ubiquitination. Substrate-specific adapter for the anaphase promoting complex/cyclosome (APC/C) E3 ubiquitin-protein ligase complex. Associates with the APC/C in late mitosis, in replacement of CDC20, and activates the APC/C during anaphase and telophase. The APC/C remains active in degrading substrates to ensure that positive regulators of the cell cycle do not accumulate prematurely. At the G1/S transition FZR1 is phosphorylated, leading to its dissociation from the APC/C. Following DNA damage, it is required for the G2 DNA damage checkpoint: its dephosphorylation and reassociation with the APC/C leads to the ubiquitination of PLK1, preventing entry into mitosis. Acts as an adapter for APC/C to target the DNA-end resection factor RBBP8/CtIP for ubiquitination and subsequent proteasomal degradation. Through the regulation of RBBP8/CtIP protein turnover, may play a role in DNA damage response, favoring DNA double-strand repair through error-prone non-homologous end joining (NHEJ) over error-free, RBBP8-mediated homologous recombination (HR). The protein is Fizzy-related protein homolog of Homo sapiens (Human).